The following is a 411-amino-acid chain: uncharacterized protein (411 aa).

Disordered stretches follow at residues 1 to 91 and 253 to 280; these read METP…QDEE and KGPL…AYSP. Over residues 46-57 the composition is skewed to acidic residues; sequence ETTESADSENDM. Low complexity predominate over residues 74–86; the sequence is SNESFSSNQSTES. Residues 258 to 272 are compositionally biased toward basic and acidic residues; the sequence is RRNEEDENKPQEKRP. S279 carries the post-translational modification Phosphoserine.

In terms of tissue distribution, widely expressed, highest levels in cerebellum, brain cortex, hippocampus, pons, putamen and amygdala. Highly expressed in neurons, but also present in glial cells. Slightly higher expression in the dorsolateral prefrontal cortex of schizophrenic patients compared to control individuals.

It is found in the cytoplasm. This is an uncharacterized protein from Homo sapiens (Human).